Consider the following 345-residue polypeptide: MTQITLLTPDDWHLHFRDGDMLQETVPATARLFQRAIVMPNLLPPVTDAKMVTEYRERILAARPAGSTFEPLMTIFLTNNTTEQDIIDAKAAGVVAAKLYPAGATTNSDAAVKALDALFPVFEAMAKHGMLLLVHGEVTESHIDIFDREAMFIERYLARIVAAFPALKVVFEHITTKDAADFVMSAPDNVAATITPQHLLLNRNDLLVGGVRPHNFCLPVLKRSTHQEALRAVIATGSSKFFLGTDSAPHEKHRKESACGCAGCYSAWSALELYAQVFDDLGALDKLEGFASLHGPDFYGLPRNTSTVTLVKEKWTVPSEIILPNGNPIVPFFAGEEVNWKVKNA.

H13 and H15 together coordinate Zn(2+). Residues 15-17 and N41 each bind substrate; that span reads HFR. Positions 98, 135, and 173 each coordinate Zn(2+). Position 98 is an N6-carboxylysine (K98). H135 provides a ligand contact to substrate. L218 is a binding site for substrate. D246 contacts Zn(2+). D246 is a catalytic residue. Substrate contacts are provided by H250 and A262.

Belongs to the metallo-dependent hydrolases superfamily. DHOase family. Class II DHOase subfamily. As to quaternary structure, homodimer. Requires Zn(2+) as cofactor.

It catalyses the reaction (S)-dihydroorotate + H2O = N-carbamoyl-L-aspartate + H(+). Its pathway is pyrimidine metabolism; UMP biosynthesis via de novo pathway; (S)-dihydroorotate from bicarbonate: step 3/3. In terms of biological role, catalyzes the reversible cyclization of carbamoyl aspartate to dihydroorotate. In Shewanella halifaxensis (strain HAW-EB4), this protein is Dihydroorotase.